The sequence spans 148 residues: Transcriptional regulator MraZ (148 aa).

2 SpoVT-AbrB domains span residues 5-51 and 80-123; these read VSIL…PEPN and AETL…NAEE.

It belongs to the MraZ family. As to quaternary structure, forms oligomers.

Its subcellular location is the cytoplasm. The protein resides in the nucleoid. The polypeptide is Transcriptional regulator MraZ (Chromobacterium violaceum (strain ATCC 12472 / DSM 30191 / JCM 1249 / CCUG 213 / NBRC 12614 / NCIMB 9131 / NCTC 9757 / MK)).